We begin with the raw amino-acid sequence, 180 residues long: NAD(P)H-quinone oxidoreductase subunit I, chloroplastic (180 aa).

4Fe-4S ferredoxin-type domains follow at residues 55-84 (GRIH…VNWR) and 95-124 (LNYS…MTEE). Cysteine 64, cysteine 67, cysteine 70, cysteine 74, cysteine 104, cysteine 107, cysteine 110, and cysteine 114 together coordinate [4Fe-4S] cluster.

It belongs to the complex I 23 kDa subunit family. In terms of assembly, NDH is composed of at least 16 different subunits, 5 of which are encoded in the nucleus. [4Fe-4S] cluster serves as cofactor.

Its subcellular location is the plastid. It is found in the chloroplast thylakoid membrane. It carries out the reaction a plastoquinone + NADH + (n+1) H(+)(in) = a plastoquinol + NAD(+) + n H(+)(out). It catalyses the reaction a plastoquinone + NADPH + (n+1) H(+)(in) = a plastoquinol + NADP(+) + n H(+)(out). In terms of biological role, NDH shuttles electrons from NAD(P)H:plastoquinone, via FMN and iron-sulfur (Fe-S) centers, to quinones in the photosynthetic chain and possibly in a chloroplast respiratory chain. The immediate electron acceptor for the enzyme in this species is believed to be plastoquinone. Couples the redox reaction to proton translocation, and thus conserves the redox energy in a proton gradient. This is NAD(P)H-quinone oxidoreductase subunit I, chloroplastic from Platanus occidentalis (Sycamore).